Consider the following 332-residue polypeptide: MMNTYDNQHREQQKLSENILKTKPLIAIVGPTAVGKTDISIKVAERLPVSTGIISADSMQVYKKMDIGTAKPSQEIRTKIPHYLVDNVEPDEEFSVGRYQKHAKSILNQLYQNKELPLLVGGTGLYVDALIYDFSMNELPKSTKYRQELQQKAEQDGLEQLYRKLEKVDPDAADRIHPNDQRRIIRALEVYYYTGEPISQRQKRRYDSPYNLLIFGITMDRNKLYNKIETRVDQMIDQGLVEEVKYLLENGYHLQLTSMQGLGYKEIAGYLMGDYDLETAVQKLKKNTKRFAKRQLSWFRRDPNIKWLDITETDKSEICDKIIDMILKEYLE.

30 to 37 provides a ligand contact to ATP; it reads GPTAVGKT. Position 32 to 37 (32 to 37) interacts with substrate; sequence TAVGKT. Residues 57-60 are interaction with substrate tRNA; that stretch reads DSMQ.

Belongs to the IPP transferase family. In terms of assembly, monomer. Mg(2+) serves as cofactor.

The catalysed reaction is adenosine(37) in tRNA + dimethylallyl diphosphate = N(6)-dimethylallyladenosine(37) in tRNA + diphosphate. Catalyzes the transfer of a dimethylallyl group onto the adenine at position 37 in tRNAs that read codons beginning with uridine, leading to the formation of N6-(dimethylallyl)adenosine (i(6)A). This is tRNA dimethylallyltransferase from Natranaerobius thermophilus (strain ATCC BAA-1301 / DSM 18059 / JW/NM-WN-LF).